A 323-amino-acid polypeptide reads, in one-letter code: tRNA-dihydrouridine(16) synthase (323 aa).

FMN is bound by residues 7–9 (PME) and Gln-68. The active-site Proton donor is the Cys-98. Residues Lys-139, 199-201 (NGE), and 223-224 (GR) each bind FMN.

The protein belongs to the Dus family. DusC subfamily. FMN is required as a cofactor.

The enzyme catalyses 5,6-dihydrouridine(16) in tRNA + NADP(+) = uridine(16) in tRNA + NADPH + H(+). It carries out the reaction 5,6-dihydrouridine(16) in tRNA + NAD(+) = uridine(16) in tRNA + NADH + H(+). Its function is as follows. Catalyzes the synthesis of 5,6-dihydrouridine (D), a modified base found in the D-loop of most tRNAs, via the reduction of the C5-C6 double bond in target uridines. Specifically modifies U16 in tRNAs. In Pseudomonas putida (strain ATCC 47054 / DSM 6125 / CFBP 8728 / NCIMB 11950 / KT2440), this protein is tRNA-dihydrouridine(16) synthase.